The sequence spans 89 residues: Nitrogen regulatory protein (89 aa).

A PTS EIIA type-2 domain is found at 6-89 (TILTPGRSLV…ALLHLEAPID (84 aa)). His68 functions as the Tele-phosphohistidine intermediate in the catalytic mechanism.

The protein resides in the cytoplasm. In terms of biological role, seems to have a role in regulating nitrogen assimilation. This Pseudomonas putida (Arthrobacter siderocapsulatus) protein is Nitrogen regulatory protein (ptsN).